The following is a 361-amino-acid chain: (S)-coclaurine N-methyltransferase (361 aa).

S-adenosyl-L-methionine is bound by residues Ser-101, Gly-139, Asn-163, Gln-167, Asp-189, Ile-190, and Val-205. Cys-336 is an active-site residue.

The protein belongs to the CFA/CMAS family. Homodimer. Highly expressed in rhizomes. Detected in roots, petioles, flower buds and leaves. Expressed between the developing stele and ground tissues near the root apical meristem, in the immature endodermis, the pericycle and the spokes of developing xylem in the apical region of the root and in the protoderm of leaf primordia in rhizomes.

The protein localises to the cytoplasm. The enzyme catalyses norreticuline + S-adenosyl-L-methionine = reticuline + S-adenosyl-L-homocysteine + H(+). The catalysed reaction is (S)-coclaurine + S-adenosyl-L-methionine = (S)-N-methylcoclaurine + S-adenosyl-L-homocysteine + H(+). It catalyses the reaction heliamine + S-adenosyl-L-methionine = N-methylheliamine + S-adenosyl-L-homocysteine + H(+). The protein operates within alkaloid biosynthesis. Its function is as follows. Involved in the biosynthesis of protoberberine alkaloids. N-methyltransferase with a substrate preference for (R,S)-norreticuline but also active with dimethoxytetrahydroisoquinoline. This chain is (S)-coclaurine N-methyltransferase, found in Thalictrum flavum subsp. glaucum (Yellow meadow rue).